Reading from the N-terminus, the 430-residue chain is Adenylosuccinate synthetase (430 aa).

Residues 11–17 (GDEGKGK) and 39–41 (GHS) contribute to the GTP site. Catalysis depends on aspartate 12, which acts as the Proton acceptor. Mg(2+)-binding residues include aspartate 12 and glycine 39. Residues 12-15 (DEGK), 37-40 (NAGH), threonine 129, arginine 143, asparagine 221, threonine 236, and arginine 300 contribute to the IMP site. The active-site Proton donor is the histidine 40. Position 296 to 302 (296 to 302 (VSTGRKR)) interacts with substrate. GTP-binding positions include arginine 302, 328–330 (KLD), and 412–414 (GTG).

Belongs to the adenylosuccinate synthetase family. Homodimer. Mg(2+) serves as cofactor.

It is found in the cytoplasm. It catalyses the reaction IMP + L-aspartate + GTP = N(6)-(1,2-dicarboxyethyl)-AMP + GDP + phosphate + 2 H(+). The protein operates within purine metabolism; AMP biosynthesis via de novo pathway; AMP from IMP: step 1/2. In terms of biological role, plays an important role in the de novo pathway and in the salvage pathway of purine nucleotide biosynthesis. Catalyzes the first committed step in the biosynthesis of AMP from IMP. This chain is Adenylosuccinate synthetase, found in Sordaria macrospora (strain ATCC MYA-333 / DSM 997 / K(L3346) / K-hell).